A 397-amino-acid polypeptide reads, in one-letter code: Elongation factor Tu (397 aa).

A tr-type G domain is found at 10–206; the sequence is KPHVNIGTIG…AIDSYIPTPE (197 aa). The interval 19–26 is G1; sequence GHVDHGKT. Residue 19-26 coordinates GTP; that stretch reads GHVDHGKT. A Mg(2+)-binding site is contributed by threonine 26. The tract at residues 60–64 is G2; it reads GITIN. The tract at residues 81–84 is G3; the sequence is DCPG. GTP-binding positions include 81–85 and 136–139; these read DCPGH and NKAD. Residues 136 to 139 are G4; it reads NKAD. A G5 region spans residues 174–176; sequence SAL.

This sequence belongs to the TRAFAC class translation factor GTPase superfamily. Classic translation factor GTPase family. EF-Tu/EF-1A subfamily. Monomer.

The protein resides in the cytoplasm. The enzyme catalyses GTP + H2O = GDP + phosphate + H(+). Functionally, GTP hydrolase that promotes the GTP-dependent binding of aminoacyl-tRNA to the A-site of ribosomes during protein biosynthesis. The sequence is that of Elongation factor Tu from Clostridium botulinum (strain ATCC 19397 / Type A).